Reading from the N-terminus, the 227-residue chain is Uracil-DNA glycosylase (227 aa).

The active-site Proton acceptor is the Asp68.

It belongs to the uracil-DNA glycosylase (UDG) superfamily. UNG family.

The protein localises to the cytoplasm. It catalyses the reaction Hydrolyzes single-stranded DNA or mismatched double-stranded DNA and polynucleotides, releasing free uracil.. Functionally, excises uracil residues from the DNA which can arise as a result of misincorporation of dUMP residues by DNA polymerase or due to deamination of cytosine. This chain is Uracil-DNA glycosylase, found in Mycolicibacterium paratuberculosis (strain ATCC BAA-968 / K-10) (Mycobacterium paratuberculosis).